Here is a 137-residue protein sequence, read N- to C-terminus: Nucleoside diphosphate kinase (137 aa).

Residues Lys-9, Phe-57, Arg-85, Thr-91, Arg-102, and Asn-112 each coordinate ATP. Residue His-115 is the Pros-phosphohistidine intermediate of the active site.

Belongs to the NDK family. In terms of assembly, homotetramer. Requires Mg(2+) as cofactor.

It localises to the cytoplasm. The enzyme catalyses a 2'-deoxyribonucleoside 5'-diphosphate + ATP = a 2'-deoxyribonucleoside 5'-triphosphate + ADP. The catalysed reaction is a ribonucleoside 5'-diphosphate + ATP = a ribonucleoside 5'-triphosphate + ADP. Major role in the synthesis of nucleoside triphosphates other than ATP. The ATP gamma phosphate is transferred to the NDP beta phosphate via a ping-pong mechanism, using a phosphorylated active-site intermediate. This chain is Nucleoside diphosphate kinase, found in Aliarcobacter butzleri (strain RM4018) (Arcobacter butzleri).